A 339-amino-acid chain; its full sequence is Ketol-acid reductoisomerase (NADP(+)) (339 aa).

Residues 1–182 (MRVYYDSDAD…GGGRAGIIET (182 aa)) form the KARI N-terminal Rossmann domain. Residues 24–27 (YGSQ), Arg-48, Ser-51, and 83–86 (DEGQ) each bind NADP(+). His-108 is a catalytic residue. Gly-134 contributes to the NADP(+) binding site. The 146-residue stretch at 183-328 (TFKEECETDL…EKLRAMMPWI (146 aa)) folds into the KARI C-terminal knotted domain. Mg(2+)-binding residues include Asp-191, Glu-195, Glu-227, and Glu-231. Ser-252 contributes to the substrate binding site.

This sequence belongs to the ketol-acid reductoisomerase family. Mg(2+) serves as cofactor.

It carries out the reaction (2R)-2,3-dihydroxy-3-methylbutanoate + NADP(+) = (2S)-2-acetolactate + NADPH + H(+). The enzyme catalyses (2R,3R)-2,3-dihydroxy-3-methylpentanoate + NADP(+) = (S)-2-ethyl-2-hydroxy-3-oxobutanoate + NADPH + H(+). It functions in the pathway amino-acid biosynthesis; L-isoleucine biosynthesis; L-isoleucine from 2-oxobutanoate: step 2/4. It participates in amino-acid biosynthesis; L-valine biosynthesis; L-valine from pyruvate: step 2/4. Its function is as follows. Involved in the biosynthesis of branched-chain amino acids (BCAA). Catalyzes an alkyl-migration followed by a ketol-acid reduction of (S)-2-acetolactate (S2AL) to yield (R)-2,3-dihydroxy-isovalerate. In the isomerase reaction, S2AL is rearranged via a Mg-dependent methyl migration to produce 3-hydroxy-3-methyl-2-ketobutyrate (HMKB). In the reductase reaction, this 2-ketoacid undergoes a metal-dependent reduction by NADPH to yield (R)-2,3-dihydroxy-isovalerate. The polypeptide is Ketol-acid reductoisomerase (NADP(+)) (Acidiphilium cryptum (strain JF-5)).